The chain runs to 323 residues: Melanocortin receptor 3 (323 aa).

Over 1–37 (MNSSCCLSSVSPMLPNLSEHPAAPPASNRSGSGFCEQ) the chain is Extracellular. Asparagine 2, asparagine 16, and asparagine 28 each carry an N-linked (GlcNAc...) asparagine glycan. A helical transmembrane segment spans residues 38-63 (VFIKPEVFLALGIVSLMENILVILAV). Residues 64–75 (VRNGNLHSPMYF) are Cytoplasmic-facing. Residues 76–100 (FLCSLAAADMLVSLSNSLETIMIAV) traverse the membrane as a helical segment. Residues 101 to 118 (INSDSLTLEDQFIQHMDN) lie on the Extracellular side of the membrane. Residues 119–140 (IFDSMICISLVASICNLLAIAI) traverse the membrane as a helical segment. Residues 141-160 (DRYVTIFYALRYHSIMTVRK) lie on the Cytoplasmic side of the membrane. Residues 161-181 (ALTLIGVIWVCCGICGVMFII) traverse the membrane as a helical segment. The Extracellular segment spans residues 182–186 (YSESK). The chain crosses the membrane as a helical span at residues 187–210 (MVIVCLITMFFAMVLLMGTLYIHM). Residues 211–245 (FLFARLHVQRIAVLPPAGVVAPQQHSCMKGAVTIT) are Cytoplasmic-facing. Residues 246-268 (ILLGVFIFCWAPFFLHLVLIITC) form a helical membrane-spanning segment. The Extracellular segment spans residues 269-277 (PTNPYCICY). A helical transmembrane segment spans residues 278–301 (TAHFNTYLVLIMCNSVIDPLIYAF). At 302-323 (RSLELRNTFKEILCGCNSMNLG) the chain is on the cytoplasmic side. Cysteine 315 carries the S-palmitoyl cysteine lipid modification.

It belongs to the G-protein coupled receptor 1 family. In terms of tissue distribution, brain.

Its subcellular location is the cell membrane. Functionally, receptor for MSH (alpha, beta and gamma) and ACTH. This receptor is mediated by G proteins which activate adenylate cyclase. Required for expression of anticipatory patterns of activity and wakefulness during periods of limited nutrient availability and for the normal regulation of circadian clock activity in the brain. The polypeptide is Melanocortin receptor 3 (Mc3r) (Mus musculus (Mouse)).